We begin with the raw amino-acid sequence, 43 residues long: MLMSTLPGGVILVFILVGLACIAIISTIIYRKWQARQRGLQRF.

The propeptide occupies 1–5 (MLMST). Residues 9-29 (GVILVFILVGLACIAIISTII) traverse the membrane as a helical segment. At 30-43 (YRKWQARQRGLQRF) the chain is on the cytoplasmic side.

As to quaternary structure, monomer and homodimer. Associated with the 100 kDa subunit of the plasma membrane H(+)-ATPase.

The protein resides in the cell membrane. The chain is Plasma membrane ATPase proteolipid 2 (PMP2) from Saccharomyces cerevisiae (strain ATCC 204508 / S288c) (Baker's yeast).